The following is a 327-amino-acid chain: Putative cyclin-dependent kinase F-2 (327 aa).

Residues 4-295 form the Protein kinase domain; the sequence is YECLGKIGEG…AADALRCAWF (292 aa). Residues 10 to 18 and K33 contribute to the ATP site; that span reads IGEGAAGVV. Catalysis depends on D134, which acts as the Proton acceptor. T167 is subject to Phosphothreonine.

Belongs to the protein kinase superfamily. CMGC Ser/Thr protein kinase family. CDC2/CDKX subfamily.

It catalyses the reaction L-seryl-[protein] + ATP = O-phospho-L-seryl-[protein] + ADP + H(+). It carries out the reaction L-threonyl-[protein] + ATP = O-phospho-L-threonyl-[protein] + ADP + H(+). The enzyme catalyses [DNA-directed RNA polymerase] + ATP = phospho-[DNA-directed RNA polymerase] + ADP + H(+). The sequence is that of Putative cyclin-dependent kinase F-2 (CDKF-2) from Oryza sativa subsp. japonica (Rice).